The following is a 1186-amino-acid chain: Sericin 1 (1186 aa).

Residues 1 to 21 (MRFVLCCTLIALAALSVKAFG) form the signal peptide. 2 stretches are compositionally biased toward polar residues: residues 39–48 (AASSESSYLN) and 104–115 (NGGSASAGQSRD). 3 disordered regions span residues 39-119 (AASS…SSLR), 131-494 (AVAA…EDSS), and 518-1157 (GGAT…VNRL). Low complexity predominate over residues 145 to 155 (AQQNAQANWNA). A compositionally biased stretch (basic and acidic residues) spans 180–198 (SDKDITAASKDDSRADSSR). The segment covering 211–224 (SESAGLSDRSASSS) has biased composition (low complexity). Over residues 256 to 275 (YYNSSPDGSYNAGTRDSSIS) the composition is skewed to polar residues. Positions 286-299 (ADKDQIRAANDRSS) are enriched in basic and acidic residues. A compositionally biased stretch (low complexity) spans 300 to 312 (SKQLKQSSAQISS). Positions 321-334 (SKDRQYSNDKRSKS) are enriched in basic and acidic residues. Polar residues-rich tracts occupy residues 356–380 (RQSN…QTSK), 393–409 (AHSS…SSSY), and 416–445 (FSSS…ASRE). 6 stretches are compositionally biased toward low complexity: residues 465–491 (ASQS…TLSE), 518–537 (GGAT…VSGA), 553–698 (SSSS…YGYS), 705–1004 (RVSS…YSSS), 1015–1075 (SSSN…ASSE), and 1097–1145 (SSTT…TSSS). 11 repeat units span residues 593-630 (SSTG…GGSV), 631-668 (SSTG…GGSV), 669-706 (SSTG…GGRV), 707-744 (SSTG…DGSV), 745-782 (SSTG…DGSV), 783-820 (SSTG…DGSV), 821-858 (SSTG…DGSV), 859-896 (SSTG…DGSV), 897-934 (SSTG…DGSV), 935-972 (SSTG…DGSV), and 973-1010 (SSTG…DGSV). The span at 1148–1157 (RSHHSGVNRL) shows a compositional bias: basic residues.

In terms of tissue distribution, produced exclusively in the middle (MSG) section of silk glands.

It localises to the secreted. In terms of biological role, provides the silk fibroin thread with a sticky coating. Acts as a cement by sticking silk threads together. The polypeptide is Sericin 1 (ser1) (Bombyx mori (Silk moth)).